We begin with the raw amino-acid sequence, 348 residues long: Phosphoribosylformylglycinamidine cyclo-ligase (348 aa).

The protein belongs to the AIR synthase family.

The protein localises to the cytoplasm. It carries out the reaction 2-formamido-N(1)-(5-O-phospho-beta-D-ribosyl)acetamidine + ATP = 5-amino-1-(5-phospho-beta-D-ribosyl)imidazole + ADP + phosphate + H(+). It participates in purine metabolism; IMP biosynthesis via de novo pathway; 5-amino-1-(5-phospho-D-ribosyl)imidazole from N(2)-formyl-N(1)-(5-phospho-D-ribosyl)glycinamide: step 2/2. This Geobacter sp. (strain M21) protein is Phosphoribosylformylglycinamidine cyclo-ligase.